The primary structure comprises 253 residues: DNA repair protein RecO (253 aa).

The protein belongs to the RecO family.

Functionally, involved in DNA repair and RecF pathway recombination. The protein is DNA repair protein RecO of Symbiobacterium thermophilum (strain DSM 24528 / JCM 14929 / IAM 14863 / T).